The chain runs to 119 residues: MSYIQKRGQNTAWRTALMRNLTTELIINESLEVTQTRAKELRRHFDHMITLAKRGDLHSRRQAASWLRDIDADKKETALQKLFNKLAKKYENRNGGYTSILKLDNRKGDNAPMVIIKLI.

It belongs to the bacterial ribosomal protein bL17 family. Part of the 50S ribosomal subunit. Contacts protein L32.

The polypeptide is Large ribosomal subunit protein bL17 (Mycoplasma mycoides subsp. mycoides SC (strain CCUG 32753 / NCTC 10114 / PG1)).